The chain runs to 428 residues: Histidinol dehydrogenase (428 aa).

NAD(+)-binding residues include Y125, Q187, and N210. The substrate site is built by S234, Q256, and H259. 2 residues coordinate Zn(2+): Q256 and H259. Catalysis depends on proton acceptor residues E323 and H324. Substrate contacts are provided by H324, D357, E411, and H416. Position 357 (D357) interacts with Zn(2+). A Zn(2+)-binding site is contributed by H416.

The protein belongs to the histidinol dehydrogenase family. It depends on Zn(2+) as a cofactor.

The enzyme catalyses L-histidinol + 2 NAD(+) + H2O = L-histidine + 2 NADH + 3 H(+). It participates in amino-acid biosynthesis; L-histidine biosynthesis; L-histidine from 5-phospho-alpha-D-ribose 1-diphosphate: step 9/9. In terms of biological role, catalyzes the sequential NAD-dependent oxidations of L-histidinol to L-histidinaldehyde and then to L-histidine. The polypeptide is Histidinol dehydrogenase (Bacteroides thetaiotaomicron (strain ATCC 29148 / DSM 2079 / JCM 5827 / CCUG 10774 / NCTC 10582 / VPI-5482 / E50)).